The primary structure comprises 471 residues: MPN domain-containing protein (471 aa).

Positions 1–10 (MAAPEPLSPA) are enriched in low complexity. The interval 1 to 63 (MAAPEPLSPA…GGGGAGAGGC (63 aa)) is disordered. An N-acetylalanine modification is found at Ala-2. Residue Ser-8 is modified to Phosphoserine. Positions 16–29 (EAPEEDEDEAEAED) are enriched in acidic residues. Gly residues predominate over residues 36 to 63 (GAGGGRSGGGGSSVSGGGGGGGAGAGGC). One can recognise an RAMA domain in the interval 71–166 (TRRAVTLRVL…KYKATWLRLH (96 aa)). 3 residues coordinate DNA: Ser-123, Ser-125, and Trp-145. Residues 170–229 (TPATAADESPASEGEEEELLMEEEEEDVLAGVSAEDKSRRPLGKSPSEPAHPEATTPGKR) form a disordered region. A phosphoserine mark is found at Ser-178 and Ser-181. Acidic residues predominate over residues 182 to 197 (EGEEEELLMEEEEEDV). An MPN domain is found at 272 to 407 (VAVSSNVLFL…PESKISPFWV (136 aa)). Residues His-349, His-351, and Asp-362 each coordinate Zn(2+). The JAMM motif motif lies at 349-362 (HSHPHSPALPSLQD).

This sequence belongs to the peptidase M67 family. In terms of assembly, monomer. Mainly monomoric, but when binds to dsDNA, forms homotetramer assembled into two homodimers. May interact with histones; this interaction is facilitated by dsDNA binding. Post-translationally, degraded following binding to N(6)-methyladenosine methylated DNA (m6A).

Probable protease. Acts as a sensor of N(6)-methyladenosine methylation on DNA (m6A): recognizes and binds m6A DNA, leading to its degradation. Binds only double strand DNA (dsDNA) in a sequence-independent manner. The sequence is that of MPN domain-containing protein from Homo sapiens (Human).